A 360-amino-acid chain; its full sequence is DNA replication and repair protein RecF (360 aa).

An ATP-binding site is contributed by 30-37 (GANGSGKT).

The protein belongs to the RecF family.

Its subcellular location is the cytoplasm. The RecF protein is involved in DNA metabolism; it is required for DNA replication and normal SOS inducibility. RecF binds preferentially to single-stranded, linear DNA. It also seems to bind ATP. The polypeptide is DNA replication and repair protein RecF (Acinetobacter baumannii (strain ATCC 17978 / DSM 105126 / CIP 53.77 / LMG 1025 / NCDC KC755 / 5377)).